The primary structure comprises 428 residues: Adenylosuccinate synthetase (428 aa).

GTP is bound by residues 12–18 (GDEGKGK) and 40–42 (GHT). The Proton acceptor role is filled by Asp-13. Mg(2+)-binding residues include Asp-13 and Gly-40. IMP contacts are provided by residues 13–16 (DEGK), 38–41 (NAGH), Thr-128, Arg-142, Gln-223, Thr-238, and Arg-302. The active-site Proton donor is His-41. 298-304 (TTTGRPR) is a binding site for substrate. GTP-binding positions include Arg-304, 330–332 (SID), and 412–414 (SVG).

The protein belongs to the adenylosuccinate synthetase family. As to quaternary structure, homodimer. Requires Mg(2+) as cofactor.

The protein localises to the cytoplasm. It catalyses the reaction IMP + L-aspartate + GTP = N(6)-(1,2-dicarboxyethyl)-AMP + GDP + phosphate + 2 H(+). The protein operates within purine metabolism; AMP biosynthesis via de novo pathway; AMP from IMP: step 1/2. In terms of biological role, plays an important role in the de novo pathway of purine nucleotide biosynthesis. Catalyzes the first committed step in the biosynthesis of AMP from IMP. In Streptococcus pneumoniae serotype 2 (strain D39 / NCTC 7466), this protein is Adenylosuccinate synthetase.